The chain runs to 2424 residues: Voltage-dependent P/Q-type calcium channel subunit alpha-1A (2424 aa).

The Cytoplasmic segment spans residues 1–98 (MARFGDEMPA…KYAKKITEWP (98 aa)). Residues 85–363 (NVVRKYAKKI…LVLGVLSGEF (279 aa)) form an I repeat. The chain crosses the membrane as a helical span at residues 99–117 (PFEYMILATIIANCIVLAL). Residues 118 to 135 (EQHLPDDDKTPMSERLDD) lie on the Extracellular side of the membrane. Residues 136–155 (TEPYFIGIFCFEAGIKIIAL) traverse the membrane as a helical segment. Residues 156-167 (GFAFHKGSYLRN) lie on the Cytoplasmic side of the membrane. The chain crosses the membrane as a helical span at residues 168–185 (GWNVMDFVVVLTGILATV). Over 186–190 (GTEFD) the chain is Extracellular. A helical membrane pass occupies residues 191-209 (LRTLRAVRVLRPLKLVSGI). At 210–228 (PSLQVVLKSIMKAMIPLLQ) the chain is on the cytoplasmic side. Residues 229–248 (IGLLLFFAILIFAIIGLEFY) traverse the membrane as a helical segment. Residues 249–335 (MGKFHTTCFE…NSNDASGNTW (87 aa)) are Extracellular-facing. Asparagine 283 carries N-linked (GlcNAc...) asparagine glycosylation. A Ca(2+)-binding site is contributed by glutamate 318. The helical transmembrane segment at 336 to 360 (NWLYFIPLIIIGSFFMLNLVLGVLS) threads the bilayer. At 361–487 (GEFAKERERV…FYIRRMVKTQ (127 aa)) the chain is on the cytoplasmic side. Positions 383 to 400 (QQIERELNGYMEWISKAE) are binding to the beta subunit. Threonine 409 bears the Phosphothreonine mark. Residues serine 448 and serine 451 each carry the phosphoserine modification. The II repeat unit spans residues 473–717 (ERRMRFYIRR…VFLAIAVDNL (245 aa)). The helical transmembrane segment at 488 to 506 (AFYWTVLSLVALNTLCVAI) threads the bilayer. Over 507-521 (VHYNQPEWLSDFLYY) the chain is Extracellular. A helical transmembrane segment spans residues 522–541 (AEFIFLGLFMSEMFIKMYGL). The Cytoplasmic segment spans residues 542–549 (GTRPYFHS). Residues 550 to 568 (SFNCFDCGVIIGSIFEVIW) form a helical membrane-spanning segment. Residues 569–578 (AVIKPGTSFG) are Extracellular-facing. The helical transmembrane segment at 579–597 (ISVLRALRLLRIFKVTKYW) threads the bilayer. The Cytoplasmic portion of the chain corresponds to 598-616 (ASLRNLVVSLLNSMKSIIS). Residues 617–636 (LLFLLFLFIVVFALLGMQLF) traverse the membrane as a helical segment. Topologically, residues 637–689 (GGQFNFDEGTPPTNFDTFPAAIMTVFQILTGEDWNEVMYDGIKSQGGVQGGMV) are extracellular. Residue glutamate 668 participates in Ca(2+) binding. A helical membrane pass occupies residues 690-714 (FSIYFIVLTLFGNYTLLNVFLAIAV). At 715-1253 (DNLANAQELT…RLCHYILNLR (539 aa)) the chain is on the cytoplasmic side. A phosphoserine mark is found at serine 750, serine 753, and serine 790. The segment at 819-1229 (HLDRPLVVDP…GEDGPKPMPP (411 aa)) is disordered. Basic and acidic residues-rich tracts occupy residues 893-912 (ELSREGPYGRESDHQAREGG), 922-931 (EAERGKAGDP), and 969-996 (RPGEDGPDDKAERRGRHREGSRPARSGE). Over residues 1053–1065 (PNLSTTRPIQQDL) the composition is skewed to polar residues. Phosphoserine occurs at positions 1091 and 1104. A compositionally biased stretch (low complexity) spans 1110–1140 (SSTDPAGPTPATAANPQNSTASRRTPNNPGN). A compositionally biased stretch (polar residues) spans 1151-1168 (ENSLIVTNPSTAQTNSAK). The segment covering 1204–1214 (LPKKEDEKKEE) has biased composition (basic and acidic residues). The III repeat unit spans residues 1240-1523 (NPLRRLCHYI…IFVALIIITF (284 aa)). The helical transmembrane segment at 1254 to 1272 (YFEMCILMVIAMSSIALAA) threads the bilayer. Over 1273 to 1288 (EDPVQPNAPRNNVLRY) the chain is Extracellular. Residues 1289 to 1308 (FDYVFTGVFTFEMVIKMIDL) form a helical membrane-spanning segment. Over 1309-1320 (GLVLHQGAYFRD) the chain is Cytoplasmic. The chain crosses the membrane as a helical span at residues 1321 to 1339 (LWNILDFIVVSGALVAFAF). Over 1340 to 1350 (TGNSKGKDINT) the chain is Extracellular. The chain crosses the membrane as a helical span at residues 1351–1369 (IKSLRVLRVLRPLKTIKRL). The Cytoplasmic segment spans residues 1370-1388 (PKLKAVFDCVVNSLKNVFN). The chain crosses the membrane as a helical span at residues 1389–1408 (ILIVYMLFMFIFAVVAVQLF). Residues 1409-1495 (KGKFFHCTDE…QGPSPGYRME (87 aa)) are Extracellular-facing. Ca(2+) is bound at residue glutamate 1469. A helical transmembrane segment spans residues 1496–1520 (MSIFYVVYFVVFPFFFVNIFVALII). Residues 1521–1575 (ITFQEQGDKMMEEYSLEKNERACIDFAISAKPLTRHMPQNKQSFQYRMWQFVVSP) are Cytoplasmic-facing. One copy of the IV repeat lies at 1560–1823 (NKQSFQYRMW…LFVAVIMDNF (264 aa)). Residues 1576–1604 (PFEYTIMAMIALNTIVLMMKFYGASVAYD) traverse the membrane as a helical segment. The Extracellular portion of the chain corresponds to 1605–1609 (NALKV). Residues 1610-1629 (FNIVFTSLFSLECLLKVLAF) form a helical membrane-spanning segment. The Cytoplasmic segment spans residues 1630–1637 (GILNYFRD). A helical membrane pass occupies residues 1638–1656 (AWNIFDFVTVLGSITDILV). At 1657-1665 (TEFGNNFIN) the chain is on the extracellular side. An N-linked (GlcNAc...) asparagine glycan is attached at asparagine 1665. A helical membrane pass occupies residues 1666–1684 (LSFLRLFRAARLIKLLRQG). At 1685 to 1703 (YTIRILLWTFVQSFKALPY) the chain is on the cytoplasmic side. The chain crosses the membrane as a helical span at residues 1704-1723 (VCLLIAMLFFIYAIIGMQVF). Residues 1724–1795 (GNIGIDMEDE…ILTPECGNEF (72 aa)) are Extracellular-facing. A helical transmembrane segment spans residues 1796-1820 (AYFYFVSFIFLCSFLMLNLFVAVIM). Residues 1821–2424 (DNFEYLTRDS…GGPRASAPSP (604 aa)) are Cytoplasmic-facing. Threonine 1993 bears the Phosphothreonine mark. The tract at residues 1997 to 2424 (FQRMEPPPDE…GGPRASAPSP (428 aa)) is disordered. Polar residues predominate over residues 2037–2053 (SWVTQRAQEMFQKTGTW). Phosphoserine is present on residues serine 2054, serine 2072, serine 2084, serine 2086, serine 2127, and serine 2148. Positions 2074-2090 (EMREMSQDGYSDSEHCL) are enriched in basic and acidic residues. Composition is skewed to basic and acidic residues over residues 2142 to 2159 (RRLDDYSLERVPPEENQR) and 2200 to 2210 (PSREREQERGR). Residues 2211-2229 (PKDRKHRPHHHHHHHHHPG) show a composition bias toward basic residues. The segment covering 2249–2262 (VARVRPARAPALAH) has biased composition (low complexity). Basic residues predominate over residues 2280 to 2305 (RRARRPRPRQRRRPRRRRGGGGRALR).

Belongs to the calcium channel alpha-1 subunit (TC 1.A.1.11) family. CACNA1A subfamily. Voltage-dependent calcium channels are multisubunit complexes, consisting of alpha-1, alpha-2, beta and delta subunits in a 1:1:1:1 ratio. The channel activity is directed by the pore-forming and voltage-sensitive alpha-1 subunit. In many cases, this subunit is sufficient to generate voltage-sensitive calcium channel activity. The auxiliary subunits beta and alpha-2/delta linked by a disulfide bridge regulate the channel activity. Interacts with CABP1. Interacts with the spider omega-agatoxin-IVA (AC P30288). Interacts with TSPOAP1. In terms of tissue distribution, brain specific. Purkinje cells contain predominantly P-type VSCC, the Q-type being a prominent calcium current in cerebellar granule cells.

It is found in the cell membrane. It catalyses the reaction Ca(2+)(in) = Ca(2+)(out). Voltage-sensitive calcium channels (VSCC) mediate the entry of calcium ions into excitable cells and are also involved in a variety of calcium-dependent processes, including muscle contraction, hormone or neurotransmitter release, gene expression, cell motility, cell division and cell death. The isoform alpha-1A gives rise to P and/or Q-type calcium currents. P/Q-type calcium channels belong to the 'high-voltage activated' (HVA) group and are specifically blocked by the spider omega-agatoxin-IVA (AC P54282). They are however insensitive to dihydropyridines (DHP). The protein is Voltage-dependent P/Q-type calcium channel subunit alpha-1A (CACNA1A) of Oryctolagus cuniculus (Rabbit).